Here is a 195-residue protein sequence, read N- to C-terminus: Alkyl hydroperoxide reductase C (195 aa).

One can recognise a Thioredoxin domain in the interval 4–170; that stretch reads LTIGDQFPEY…VLRVLDALQS (167 aa). An Isoglutamyl lysine isopeptide (Lys-Gln) (interchain with Q-Cter in protein Pup) cross-link involves residue lysine 41. The active-site Cysteine sulfenic acid (-SOH) intermediate is cysteine 61.

Belongs to the peroxiredoxin family. AhpC/Prx1 subfamily. In terms of assembly, homodimer; disulfide-linked, upon oxidation. 6 homodimers assemble to form a ring-like dodecamer. Identified in a complex with AhpD, DlaT and Lpd.

Its subcellular location is the cytoplasm. The enzyme catalyses N(6)-[(R)-dihydrolipoyl]-L-lysyl-[lipoyl-carrier protein] + a hydroperoxide = N(6)-[(R)-lipoyl]-L-lysyl-[lipoyl-carrier protein] + an alcohol + H2O. Functionally, thiol-specific peroxidase that catalyzes the reduction of hydrogen peroxide and organic hydroperoxides to water and alcohols, respectively. Plays a role in cell protection against oxidative stress by detoxifying peroxides. Together with AhpD, DlaT and Lpd, constitutes an NADH-dependent peroxidase active against hydrogen and alkyl peroxides as well as serving as a peroxynitrite reductase, thus protecting the bacterium against reactive nitrogen intermediates and oxidative stress generated by the host immune system. Does not however seem to play a role in detoxification of isoniazid. This is Alkyl hydroperoxide reductase C from Mycolicibacterium smegmatis (strain ATCC 700084 / mc(2)155) (Mycobacterium smegmatis).